The chain runs to 208 residues: MIICASRVSHLALQKFRNQIPTMKLHKVRTVNCSADYPDVECNGYTAYDTAQKVIVISFRGTKGPNQNNQIVEGMTRDGLLPYFGNGSGKIFKVLYDSFMLLWNEWYSNKFPSSFHIIHRLDLIPRVPAIDPHTNTTVMFHPRTEVWYNNYMRLNDTYQICEEADGNNCSDAVTEGLNMNDHGFYFDINIANWGKDGCPKNTTGYSQP.

This is an uncharacterized protein from Caenorhabditis elegans.